Here is a 600-residue protein sequence, read N- to C-terminus: MMTRDELNIILPTLPEKPGCYQYFDEDGKVIYVGKAKNLRRRVSSYFYKEHADRKTRILVRQIRSIKYIVVDSEGDALLLENSLIKEYQPRYNVLLKDGKTYPSIVIKREPFPRIFATRDIKKDGSEYFGPYPGALIAKGMLRLVKEIYPIRTCKLDLREEKIRQGRYRVCLQYHIKKCKGPCIGNQTSNEYESNVSEIRDLLRGNLHRLVRMYRDRMQAYSEELRFEEAQICKERIELLERYEAKHTVVPRNIDNVDVFSYDEDEHTAYINYMHIEHGGINRVYTLEYRKQIEESKEELLAAAITELRQRFESNAHEIVLPFDTGWQTGESITTTIPRRGDKRKLLELSEKNVAQYKLDKLKRAEKLNPEQRALHIVHGIQKDLHLDRPPKHIECFDNSNIQGTSPVAACVVFKMGKPSKKDYRKFHVKTVEGPNDFASMREIISRHYTRLTEENLPLPDLIVVDGGKGQLSAAYETLDKLGLIGKIPIIGLAERLEEIFFPKDPVPLILDKKSETLKVIQHLRDEAHRFGIGFHRDVRSKKQIQSELDNIKGIGKKTKEDLLRHFKSVKRIRSAEEEELSALIGRNKAKLLYEGLRKK.

A GIY-YIG domain is found at glutamate 16–valine 94. The UVR domain maps to histidine 208–tyrosine 243.

This sequence belongs to the UvrC family. Interacts with UvrB in an incision complex.

It is found in the cytoplasm. The UvrABC repair system catalyzes the recognition and processing of DNA lesions. UvrC both incises the 5' and 3' sides of the lesion. The N-terminal half is responsible for the 3' incision and the C-terminal half is responsible for the 5' incision. The polypeptide is UvrABC system protein C (Porphyromonas gingivalis (strain ATCC 33277 / DSM 20709 / CIP 103683 / JCM 12257 / NCTC 11834 / 2561)).